The sequence spans 347 residues: DnaJ protein ERDJ3B (347 aa).

The signal sequence occupies residues 1–23; that stretch reads MAAPRWIGPLLLLLLHFVAAVAG. Positions 25 to 90 constitute a J domain; it reads SYYDVLQVPK…EKRKIYDRYG (66 aa).

As to quaternary structure, interacts with BIP1.

It localises to the endoplasmic reticulum. Its function is as follows. May play a role in protein folding in the endoplasmic reticulum. This is DnaJ protein ERDJ3B from Oryza sativa subsp. japonica (Rice).